A 250-amino-acid polypeptide reads, in one-letter code: Flavin-dependent thymidylate synthase (250 aa).

One can recognise a ThyX domain in the interval 7–233 (LRVQLIAKTD…PAVFADFEIA (227 aa)). FAD-binding positions include Ser-71, 95–97 (RHR), and Gln-103. Residues 92 to 95 (ELIR), 103 to 107 (QLSQR), and Arg-172 contribute to the dUMP site. Positions 95 to 105 (RHRHFSYSQLS) match the ThyX motif motif. Residues 188-190 (NYR) and His-194 contribute to the FAD site. Arg-199 provides a ligand contact to dUMP. The Involved in ionization of N3 of dUMP, leading to its activation role is filled by Arg-199.

Belongs to the thymidylate synthase ThyX family. Homotetramer. It depends on FAD as a cofactor.

The enzyme catalyses dUMP + (6R)-5,10-methylene-5,6,7,8-tetrahydrofolate + NADPH + H(+) = dTMP + (6S)-5,6,7,8-tetrahydrofolate + NADP(+). It participates in pyrimidine metabolism; dTTP biosynthesis. Its function is as follows. Catalyzes the reductive methylation of 2'-deoxyuridine-5'-monophosphate (dUMP) to 2'-deoxythymidine-5'-monophosphate (dTMP) while utilizing 5,10-methylenetetrahydrofolate (mTHF) as the methyl donor, and NADPH and FADH(2) as the reductant. The sequence is that of Flavin-dependent thymidylate synthase from Mycobacterium avium (strain 104).